The sequence spans 422 residues: Glucosylglycerol-phosphate phosphatase (422 aa).

Residue Asp-403 is the Proton donor of the active site.

It belongs to the histidine acid phosphatase family. Monomer. Interacts with GGPS.

It carries out the reaction 2-O-(alpha-D-glucopyranosyl)-sn-glycerol 3-phosphate + H2O = 2-O-(alpha-D-glucopyranosyl)glycerol + phosphate. Phosphorylates glucosylglycerol-phosphate the precursor of the osmoprotectant glucosylglycerol necessary for salt adaptation of Synechocystis. The chain is Glucosylglycerol-phosphate phosphatase (stpA) from Synechocystis sp. (strain ATCC 27184 / PCC 6803 / Kazusa).